We begin with the raw amino-acid sequence, 424 residues long: 3-phosphoshikimate 1-carboxyvinyltransferase (424 aa).

Residues Lys-21, Ser-22, and Arg-26 each coordinate 3-phosphoshikimate. Residue Lys-21 participates in phosphoenolpyruvate binding. Phosphoenolpyruvate-binding residues include Gly-92 and Arg-120. 3-phosphoshikimate contacts are provided by Ser-163, Ser-164, Gln-165, Ser-191, Asp-306, and Lys-333. Gln-165 provides a ligand contact to phosphoenolpyruvate. Asp-306 functions as the Proton acceptor in the catalytic mechanism. 3 residues coordinate phosphoenolpyruvate: Arg-337, Arg-379, and Lys-405.

It belongs to the EPSP synthase family. Monomer.

It localises to the cytoplasm. The enzyme catalyses 3-phosphoshikimate + phosphoenolpyruvate = 5-O-(1-carboxyvinyl)-3-phosphoshikimate + phosphate. The protein operates within metabolic intermediate biosynthesis; chorismate biosynthesis; chorismate from D-erythrose 4-phosphate and phosphoenolpyruvate: step 6/7. Catalyzes the transfer of the enolpyruvyl moiety of phosphoenolpyruvate (PEP) to the 5-hydroxyl of shikimate-3-phosphate (S3P) to produce enolpyruvyl shikimate-3-phosphate and inorganic phosphate. The chain is 3-phosphoshikimate 1-carboxyvinyltransferase from Clostridium perfringens (strain 13 / Type A).